A 575-amino-acid polypeptide reads, in one-letter code: Arginine--tRNA ligase (575 aa).

Positions Ala131 to His141 match the 'HIGH' region motif.

The protein belongs to the class-I aminoacyl-tRNA synthetase family.

It is found in the cytoplasm. It catalyses the reaction tRNA(Arg) + L-arginine + ATP = L-arginyl-tRNA(Arg) + AMP + diphosphate. In Methanobrevibacter smithii (strain ATCC 35061 / DSM 861 / OCM 144 / PS), this protein is Arginine--tRNA ligase.